Reading from the N-terminus, the 526-residue chain is GMP synthase [glutamine-hydrolyzing] (526 aa).

The Glutamine amidotransferase type-1 domain maps to 9–207 (RILILNFGSQ…VLDICSCQGR (199 aa)). The active-site Nucleophile is Cys-86. Catalysis depends on residues His-181 and Glu-183. One can recognise a GMPS ATP-PPase domain in the interval 208 to 401 (WTPNNIKENI…LGLPFHMLYR (194 aa)). 235–241 (SGGVDST) contributes to the ATP binding site.

Homodimer.

The catalysed reaction is XMP + L-glutamine + ATP + H2O = GMP + L-glutamate + AMP + diphosphate + 2 H(+). The protein operates within purine metabolism; GMP biosynthesis; GMP from XMP (L-Gln route): step 1/1. Catalyzes the synthesis of GMP from XMP. This chain is GMP synthase [glutamine-hydrolyzing], found in Baumannia cicadellinicola subsp. Homalodisca coagulata.